Reading from the N-terminus, the 556-residue chain is MSGAIFTSLEGPGALDGTSGHPLVCPLCHAQYERPCLLDCFHEFCAGCLRGRAADGRLACPLCQHQTVVKGPSGLPPVDRLLQFLVDSSGDGTEVVRCANCDLECGKQDAETTYFCNTCGQPLCARCRDETHRARMFARHDIVALGQRSRDVLQKCTLHAEPYVLFSTDKKSLLCIRCFRDMQGESRVHCVDLESAYVQGCERLQQAVLEVKALQTATREAIELLQAMVEEVRRSAAEEEAAIQALFSSMQDKLSERKALLLQAVQSLANKAEFLDLGYELMERLQGIVTRPHRLRPAQSSKITSDHRAEFARCLEPLLLLGPRRAAGAGGGTSTLTGGLGPKVLRGPGCPSPVGKMLGSPVQKPTLHRSISTKVLLAEGDASPFTEHCRHYEDSYRRLQAEMQNLKDQVQELHRDLTKHHSLIKAEIMGDILHKALQVDAQIASEYASVEGLRAVFQEIWEDSYQRVANEQEIYEAQLHDLLQLKQENAYLTTITKQITPYIRSIAKVKERLEPRFQVPVDEPSDHPQNTHDDGVNAEAPARVSTLKPAMEKEVS.

Residues 25–64 (CPLCHAQYERPCLLDCFHEFCAGCLRGRAADGRLACPLCQ) form an RING-type zinc finger. Residues 93–145 (TEVVRCANCDLECGKQDAETTYFCNTCGQPLCARCRDETHRARMFARHDIVAL) form a B box-type; atypical zinc finger. Residues C98, C101, C127, and H132 each contribute to the Zn(2+) site. Coiled coils occupy residues 218–273 (TREA…NKAE) and 385–425 (FTEH…SLIK). The segment at 517–556 (FQVPVDEPSDHPQNTHDDGVNAEAPARVSTLKPAMEKEVS) is disordered. Over residues 524–535 (PSDHPQNTHDDG) the composition is skewed to basic and acidic residues.

As to quaternary structure, interacts with the core-glycosylated, but not the fully glycosylated form of KCNH2/HERG. Interacts with DNAJA1 and HSPA8. Interacts (via the C-terminus) with HSPA1A; this interaction additively increases KCNH2 expression.

Its subcellular location is the cytoplasm. Plays a role in cardiac repolarization possibly by stabilizing membrane expression of the potassium channel KCNH2/HERG, or by assisting its synthesis, folding or export from the endoplasmic reticulum, in a heat shock protein-dependent manner. This Bos taurus (Bovine) protein is RING finger protein 207 (RNF207).